The chain runs to 670 residues: Protein HBS1 (670 aa).

Disordered stretches follow at residues 60-88 (KDIQ…ESFQ) and 164-202 (KTVS…VSGR). Over residues 63–75 (QEEEADEDEDEDA) the composition is skewed to acidic residues. The segment covering 189 to 200 (PSPKVPSSPVVS) has biased composition (low complexity). Residues 245–468 (KSHIHMIVIG…DVIENFKIPE (224 aa)) enclose the tr-type G domain. Positions 254–261 (GHVDAGKS) are G1. 254-261 (GHVDAGKS) contributes to the GTP binding site. The interval 310-314 (GITMD) is G2. Residues 331-334 (DAPG) are G3. Residues 393-396 (NKLD) and 432-434 (SGL) contribute to the GTP site. The tract at residues 393–396 (NKLD) is G4. Residues 432–434 (SGL) form a G5 region.

Belongs to the TRAFAC class translation factor GTPase superfamily. Classic translation factor GTPase family. Component of the Pelota-HBS1L complex, also named Dom34-Hbs1 complex, composed of pelo and HBS1. As to expression, expressed in ovaries (at protein level).

The protein localises to the cytoplasm. It catalyses the reaction GTP + H2O = GDP + phosphate + H(+). GTPase component of the Pelota-HBS1L complex, a complex that recognizes stalled ribosomes and triggers the No-Go Decay (NGD) pathway. The Pelota-HBS1L complex recognizes ribosomes stalled at the 3' end of an mRNA and engages stalled ribosomes by destabilizing mRNA in the mRNA channel. Following ribosome-binding, the Pelota-HBS1L complex promotes recruitment of pix, which drives the disassembly of stalled ribosomes, followed by degradation of damaged mRNAs as part of the NGD pathway. Together with pelo, required for transposon silencing in the ovary and testis. Together with pelo, promotes meiosis and spermatid individualization during spermatogenesis. In Drosophila melanogaster (Fruit fly), this protein is Protein HBS1.